Consider the following 423-residue polypeptide: Gamma-glutamyl phosphate reductase (423 aa).

Residues 1-14 show a composition bias toward low complexity; sequence MTLQAAPRSAAAQQ. The disordered stretch occupies residues 1–25; the sequence is MTLQAAPRSAAAQQREPDLRQEVHD. Over residues 15 to 25 the composition is skewed to basic and acidic residues; the sequence is REPDLRQEVHD.

It belongs to the gamma-glutamyl phosphate reductase family.

It is found in the cytoplasm. The catalysed reaction is L-glutamate 5-semialdehyde + phosphate + NADP(+) = L-glutamyl 5-phosphate + NADPH + H(+). It participates in amino-acid biosynthesis; L-proline biosynthesis; L-glutamate 5-semialdehyde from L-glutamate: step 2/2. In terms of biological role, catalyzes the NADPH-dependent reduction of L-glutamate 5-phosphate into L-glutamate 5-semialdehyde and phosphate. The product spontaneously undergoes cyclization to form 1-pyrroline-5-carboxylate. The protein is Gamma-glutamyl phosphate reductase of Mycobacterium ulcerans (strain Agy99).